Consider the following 619-residue polypeptide: Dihydroxy-acid dehydratase (619 aa).

Mg(2+) is bound at residue aspartate 81. Position 122 (cysteine 122) interacts with [2Fe-2S] cluster. Positions 123 and 124 each coordinate Mg(2+). Position 124 is an N6-carboxylysine (lysine 124). [2Fe-2S] cluster is bound at residue cysteine 195. Glutamate 494 is a binding site for Mg(2+). Serine 520 acts as the Proton acceptor in catalysis.

It belongs to the IlvD/Edd family. Homodimer. It depends on [2Fe-2S] cluster as a cofactor. The cofactor is Mg(2+).

The catalysed reaction is (2R)-2,3-dihydroxy-3-methylbutanoate = 3-methyl-2-oxobutanoate + H2O. The enzyme catalyses (2R,3R)-2,3-dihydroxy-3-methylpentanoate = (S)-3-methyl-2-oxopentanoate + H2O. It functions in the pathway amino-acid biosynthesis; L-isoleucine biosynthesis; L-isoleucine from 2-oxobutanoate: step 3/4. It participates in amino-acid biosynthesis; L-valine biosynthesis; L-valine from pyruvate: step 3/4. Its function is as follows. Functions in the biosynthesis of branched-chain amino acids. Catalyzes the dehydration of (2R,3R)-2,3-dihydroxy-3-methylpentanoate (2,3-dihydroxy-3-methylvalerate) into 2-oxo-3-methylpentanoate (2-oxo-3-methylvalerate) and of (2R)-2,3-dihydroxy-3-methylbutanoate (2,3-dihydroxyisovalerate) into 2-oxo-3-methylbutanoate (2-oxoisovalerate), the penultimate precursor to L-isoleucine and L-valine, respectively. The sequence is that of Dihydroxy-acid dehydratase from Shewanella frigidimarina (strain NCIMB 400).